A 429-amino-acid chain; its full sequence is Cell wall protein ECM33 (429 aa).

Positions 1–19 (MQFKNALTATAILSASALA) are cleaved as a signal peptide. N21, N56, N82, N196, N209, N227, N234, N241, N267, N279, N304, and N328 each carry an N-linked (GlcNAc...) asparagine glycan. A Phosphoserine modification is found at S339. Low complexity predominate over residues 361-401 (LSSTSTESSKSSATSSASSSGDASNAQANVSASASSSSSSS). The segment at 361 to 410 (LSSTSTESSKSSATSSASSSGDASNAQANVSASASSSSSSSKKSKGAAPE) is disordered. N389 carries N-linked (GlcNAc...) asparagine glycosylation. G406 is lipidated: GPI-anchor amidated glycine. Residues 407–429 (AAPELVPATSFMGVVAAVGVALL) constitute a propeptide, removed in mature form.

It belongs to the SPS2 family. Post-translationally, the GPI-anchor is attached to the protein in the endoplasmic reticulum and serves to target the protein to the cell surface. There, the glucosamine-inositol phospholipid moiety is cleaved off and the GPI-modified mannoprotein is covalently attached via its lipidless GPI glycan remnant to the 1,6-beta-glucan of the outer cell wall layer. Extensively N-glycosylated.

The protein localises to the cell membrane. It is found in the secreted. The protein resides in the cell wall. Its function is as follows. Required for proper cell wall integrity and for the correct assembly of the mannoprotein outer layer of the cell wall. Important for apical bud growth. The chain is Cell wall protein ECM33 (ECM33) from Saccharomyces cerevisiae (strain ATCC 204508 / S288c) (Baker's yeast).